The primary structure comprises 542 residues: Protein phosphatase 1G (542 aa).

Residue glycine 2 is the site of N-myristoyl glycine attachment. Residue arginine 22 is modified to Omega-N-methylarginine. Positions 26 to 502 (PYGFSAMQGW…DNMTCIIICF (477 aa)) constitute a PPM-type phosphatase domain. Residues aspartate 60 and glycine 61 each coordinate Mn(2+). Disordered regions lie at residues 117–136 (IAGR…DEDD) and 164–325 (CQKV…SDSG). Position 122 is a phosphothreonine (threonine 122). 2 stretches are compositionally biased toward acidic residues: residues 123 to 136 (EDED…DEDD) and 259 to 309 (DSED…DEEM). An N6-acetyllysine modification is found at lysine 380. The Mn(2+) site is built by aspartate 438 and aspartate 493. Residues 513–542 (ESGKRKLEEALSTEGAEDTGNSDKKKAKRD) are disordered. Serine 524 carries the post-translational modification Phosphoserine.

This sequence belongs to the PP2C family. Interacts with NOL3; may dephosphorylate NOL3. Mg(2+) serves as cofactor. It depends on Mn(2+) as a cofactor. Highly expressed in testis. Low level of expression in kidney. Also expressed in a number of tissues undergoing proliferation including embryo, uterus at pregnancy, placenta, and ovaries.

It is found in the nucleus. The protein localises to the membrane. It catalyses the reaction O-phospho-L-seryl-[protein] + H2O = L-seryl-[protein] + phosphate. The enzyme catalyses O-phospho-L-threonyl-[protein] + H2O = L-threonyl-[protein] + phosphate. Functionally, may be involved in regulation of cell cycle. The polypeptide is Protein phosphatase 1G (Ppm1g) (Mus musculus (Mouse)).